Reading from the N-terminus, the 121-residue chain is Protransforming growth factor alpha (121 aa).

A signal peptide is located at residue leucine 1. Residues 2 to 16 (ENSTSLLSDPPVAAA) constitute a propeptide, removed in mature form. Topologically, residues 2 to 75 (ENSTSLLSDP…AVVAASQKKQ (74 aa)) are extracellular. An N-linked (GlcNAc...) asparagine glycan is attached at asparagine 3. The 41-residue stretch at 20–60 (HFNDCPDSHTQFCFHGTCRFLVQEDRPACVCHSGYVGARCE) folds into the EGF-like domain. Cystine bridges form between cysteine 24–cysteine 37, cysteine 32–cysteine 48, and cysteine 50–cysteine 59. Positions 67–121 (VVAASQKKQAITALVVVSIVALAVLIITCVLIHCCQVRKHCEWCRALICRHEKPS) are cleaved as a propeptide — removed in mature form. A helical transmembrane segment spans residues 76–101 (AITALVVVSIVALAVLIITCVLIHCC).

As to quaternary structure, interacts with the PDZ domains of MAGI3, SDCBP and SNTA1. The interaction with SDCBP, is required for the targeting to the cell surface. In the endoplasmic reticulum, in its immature form (i.e. with a prosegment and lacking full N-glycosylation), interacts with CNIH. In the Golgi apparatus, may form a complex with CNIH and GORASP2. Interacts (via cytoplasmic C-terminal domain) with NKD2. As to expression, hypothalamus.

Its subcellular location is the secreted. It is found in the extracellular space. The protein localises to the cell membrane. Functionally, TGF alpha is a mitogenic polypeptide that is able to bind to the EGF receptor/EGFR and to act synergistically with TGF beta to promote anchorage-independent cell proliferation in soft agar. This chain is Protransforming growth factor alpha (TGFA), found in Macaca mulatta (Rhesus macaque).